Reading from the N-terminus, the 461-residue chain is UDP-N-acetylmuramate--L-alanine ligase (461 aa).

111 to 117 is an ATP binding site; sequence GAHGKTT.

The protein belongs to the MurCDEF family.

It localises to the cytoplasm. It catalyses the reaction UDP-N-acetyl-alpha-D-muramate + L-alanine + ATP = UDP-N-acetyl-alpha-D-muramoyl-L-alanine + ADP + phosphate + H(+). It functions in the pathway cell wall biogenesis; peptidoglycan biosynthesis. In terms of biological role, cell wall formation. The protein is UDP-N-acetylmuramate--L-alanine ligase of Pelotomaculum thermopropionicum (strain DSM 13744 / JCM 10971 / SI).